The chain runs to 179 residues: Large ribosomal subunit protein uL5 (179 aa).

The protein belongs to the universal ribosomal protein uL5 family. As to quaternary structure, part of the 50S ribosomal subunit; part of the 5S rRNA/L5/L18/L25 subcomplex. Contacts the 5S rRNA and the P site tRNA. Forms a bridge to the 30S subunit in the 70S ribosome.

In terms of biological role, this is one of the proteins that bind and probably mediate the attachment of the 5S RNA into the large ribosomal subunit, where it forms part of the central protuberance. In the 70S ribosome it contacts protein S13 of the 30S subunit (bridge B1b), connecting the 2 subunits; this bridge is implicated in subunit movement. Contacts the P site tRNA; the 5S rRNA and some of its associated proteins might help stabilize positioning of ribosome-bound tRNAs. The chain is Large ribosomal subunit protein uL5 from Pseudomonas aeruginosa (strain LESB58).